A 509-amino-acid polypeptide reads, in one-letter code: Polyadenylation factor subunit 2 (509 aa).

7 WD repeats span residues 72–109 (YIHTSANKARHVINVVRWTPDGRRLLTGSSTGEFTLWN), 113–151 (FNFELINQSHDYAVRCAEWSTDGRWLISGDGGGMVKYFE), 156–192 (NVKIVQAHEMEVRDVAFSPNDSKFVTASDDGSLKVWN), 196–234 (STEELKLTGHGWDVKTVDWHPSKGLLASGSKDNLVKFWD), 238–278 (GTCI…RVFD), 282–321 (MKDVRVLRGHEKDVNCVTWHPLYPNLLTTGGSDGSVNHYS), and 350–388 (YPTAEIPFAHDLGIWSMQYHPLGHLLCTGSNDKTTRFWS). 2 disordered regions span residues 385-409 (RFWSRSRPDDKESTMDRHHLGEEQS) and 480-509 (SNSYAEPSTQNSFIPGLTSKSQDGYPQNYR). The span at 390-406 (SRPDDKESTMDRHHLGE) shows a compositional bias: basic and acidic residues.

It localises to the nucleus. In terms of biological role, required for 3'-end cleavage and polyadenylation of pre-mRNAs. Also involved in chromosome segregation where it has a role in chromosome attachment to the mitotic spindle. The chain is Polyadenylation factor subunit 2 (pfs2) from Schizosaccharomyces pombe (strain 972 / ATCC 24843) (Fission yeast).